The following is a 155-amino-acid chain: MGVTSYTHETTTPIAPTRLFKALVVDSDNLIPKLMPQVKNIEAEGDGSIKKMNFVEGSPIKYLKHKIHVVDDKNLVTKYSMIEGDVLGDKLESISYDLKFEAHGNGGCVCKSITEYHTKGDYVLKDEEHNEGQKQGMELFKIVEAYLLANPSVYA.

Belongs to the BetVI family.

The polypeptide is Pathogenesis-related protein STH-2 (STH-2) (Solanum tuberosum (Potato)).